The sequence spans 310 residues: Protein-methionine-sulfoxide reductase catalytic subunit MsrP (310 aa).

Positions 1–45 form a signal peptide, tat-type signal; it reads MRKTSSPRIAPSEITPRDLYHDRRRFMQAAAGAAAAALWPHWLSA. Residues Asn73, 76–77, Cys131, Thr166, Asn214, Arg219, and 230–232 contribute to the Mo-molybdopterin site; these read YE and SAK.

This sequence belongs to the MsrP family. As to quaternary structure, heterodimer of a catalytic subunit (MsrP) and a heme-binding subunit (MsrQ). Mo-molybdopterin is required as a cofactor. Predicted to be exported by the Tat system. The position of the signal peptide cleavage has not been experimentally proven.

It localises to the periplasm. The catalysed reaction is L-methionyl-[protein] + a quinone + H2O = L-methionyl-(S)-S-oxide-[protein] + a quinol. It carries out the reaction L-methionyl-[protein] + a quinone + H2O = L-methionyl-(R)-S-oxide-[protein] + a quinol. Functionally, part of the MsrPQ system that repairs oxidized periplasmic proteins containing methionine sulfoxide residues (Met-O), using respiratory chain electrons. Thus protects these proteins from oxidative-stress damage caused by reactive species of oxygen and chlorine generated by the host defense mechanisms. MsrPQ is essential for the maintenance of envelope integrity under bleach stress, rescuing a wide series of structurally unrelated periplasmic proteins from methionine oxidation. The catalytic subunit MsrP is non-stereospecific, being able to reduce both (R-) and (S-) diastereoisomers of methionine sulfoxide. This is Protein-methionine-sulfoxide reductase catalytic subunit MsrP from Methylococcus capsulatus (strain ATCC 33009 / NCIMB 11132 / Bath).